Reading from the N-terminus, the 202-residue chain is Small ribosomal subunit protein uS4c (202 aa).

An S4 RNA-binding domain is found at 90–153; that stretch reads MRLDNIIFRL…KSEAIISKNI (64 aa).

This sequence belongs to the universal ribosomal protein uS4 family. In terms of assembly, part of the 30S ribosomal subunit. Contacts protein S5. The interaction surface between S4 and S5 is involved in control of translational fidelity.

It is found in the plastid. It localises to the chloroplast. In terms of biological role, one of the primary rRNA binding proteins, it binds directly to 16S rRNA where it nucleates assembly of the body of the 30S subunit. Its function is as follows. With S5 and S12 plays an important role in translational accuracy. The protein is Small ribosomal subunit protein uS4c (rps4) of Hookeria lucens (Moss).